The sequence spans 590 residues: Cyclin-dependent kinase-like 3 (590 aa).

The region spanning 4 to 286 is the Protein kinase domain; that stretch reads YETLGKVGEG…SSDLLHHEYF (283 aa). ATP is bound by residues 10–18 and Lys-33; that span reads VGEGSYGTV. Positions 45–51 match the [NKR]KIAxRE motif; it reads KIAMREI. Catalysis depends on Asp-125, which acts as the Proton acceptor. Position 158 is a phosphothreonine (Thr-158). The residue at position 160 (Tyr-160) is a Phosphotyrosine. Disordered stretches follow at residues 459-508 and 547-590; these read RAKK…SNEN and LKRE…PDVE. Positions 466–477 are enriched in polar residues; that stretch reads SSQSIGQVMPNS. 2 stretches are compositionally biased toward basic and acidic residues: residues 547–556 and 580–590; these read LKRESKKTDS and TERKKNLPDVE.

It belongs to the protein kinase superfamily. CMGC Ser/Thr protein kinase family. CDC2/CDKX subfamily.

Its subcellular location is the cytoplasm. The enzyme catalyses L-seryl-[protein] + ATP = O-phospho-L-seryl-[protein] + ADP + H(+). The catalysed reaction is L-threonyl-[protein] + ATP = O-phospho-L-threonyl-[protein] + ADP + H(+). This is Cyclin-dependent kinase-like 3 from Macaca fascicularis (Crab-eating macaque).